The sequence spans 562 residues: MOB kinase activator-like 2 (562 aa).

The interval 30–50 is disordered; that stretch reads KSGSVQGTTATATATGPPSPP. A compositionally biased stretch (low complexity) spans 31–45; it reads SGSVQGTTATATATG. Residues cysteine 170, cysteine 175, histidine 250, and histidine 255 each coordinate Zn(2+). Disordered regions lie at residues 304-378, 468-523, and 538-562; these read DDTS…TASA, NFSN…STTV, and GASA…SSTA. 3 stretches are compositionally biased toward low complexity: residues 305–349, 357–378, and 471–481; these read DTSG…NSTS, NSQS…TASA, and NNNNNNHNLNH. Residues 482-514 show a composition bias toward basic residues; the sequence is LNHHHHHHHHQHHHQHHPHGHHGHQGHQGHQGH. Residues 547-562 are compositionally biased toward low complexity; the sequence is AVSAATGGATSASSTA.

This sequence belongs to the MOB1/phocein family. As to quaternary structure, interacts with and activates trc, also interacts with wts.

The protein resides in the cytoplasm. It is found in the nucleus. Required for the normal morphogenesis of a variety of polarized outgrowths including epidermal hairs, bristles, arista laterals, and dendrites. The polypeptide is MOB kinase activator-like 2 (Drosophila pseudoobscura pseudoobscura (Fruit fly)).